The chain runs to 161 residues: Large ribosomal subunit protein uL15 (161 aa).

A disordered region spans residues 1–39 (MTKLNELAPREGSTKGRMRVGRGPGSGKGKTAGRGVKGQ). Positions 22 to 36 (RGPGSGKGKTAGRGV) are enriched in gly residues.

This sequence belongs to the universal ribosomal protein uL15 family. In terms of assembly, part of the 50S ribosomal subunit.

Its function is as follows. Binds to the 23S rRNA. The sequence is that of Large ribosomal subunit protein uL15 from Caulobacter vibrioides (strain ATCC 19089 / CIP 103742 / CB 15) (Caulobacter crescentus).